Consider the following 470-residue polypeptide: Glucose-1-phosphate adenylyltransferase (470 aa).

Alpha-D-glucose 1-phosphate contacts are provided by residues glycine 165, 182–183 (EK), and serine 200.

The protein belongs to the bacterial/plant glucose-1-phosphate adenylyltransferase family. In terms of assembly, homotetramer.

The enzyme catalyses alpha-D-glucose 1-phosphate + ATP + H(+) = ADP-alpha-D-glucose + diphosphate. It functions in the pathway glycan biosynthesis; glycogen biosynthesis. Functionally, involved in the biosynthesis of ADP-glucose, a building block required for the elongation reactions to produce glycogen. Catalyzes the reaction between ATP and alpha-D-glucose 1-phosphate (G1P) to produce pyrophosphate and ADP-Glc. This Paenarthrobacter aurescens (strain TC1) protein is Glucose-1-phosphate adenylyltransferase.